Consider the following 314-residue polypeptide: Ribosomal RNA small subunit methyltransferase H (314 aa).

Residues 36-38, Asp-56, Phe-83, Asp-104, and Gln-111 contribute to the S-adenosyl-L-methionine site; that span reads AGH.

Belongs to the methyltransferase superfamily. RsmH family.

Its subcellular location is the cytoplasm. The enzyme catalyses cytidine(1402) in 16S rRNA + S-adenosyl-L-methionine = N(4)-methylcytidine(1402) in 16S rRNA + S-adenosyl-L-homocysteine + H(+). Functionally, specifically methylates the N4 position of cytidine in position 1402 (C1402) of 16S rRNA. This Brevibacillus brevis (strain 47 / JCM 6285 / NBRC 100599) protein is Ribosomal RNA small subunit methyltransferase H.